We begin with the raw amino-acid sequence, 512 residues long: Cytochrome P450 1A1 (512 aa).

Positions 29-40 (SRPQVPKGLKNP) are mitochondrial targeting signal. Ser67 carries an O-linked (GlcNAc) serine glycan. Phe224 provides a ligand contact to substrate. Cys457 provides a ligand contact to heme.

It belongs to the cytochrome P450 family. Interacts with cytosolic chaperones HSP70 and HSP90; this interaction is required for initial targeting to mitochondria. Interacts (via mitochondrial targeting signal) with TOMM40 (via N-terminus); this interaction is required for translocation across the mitochondrial outer membrane. Heme serves as cofactor. As to expression, lung, lymphocytes and placenta.

The protein localises to the endoplasmic reticulum membrane. The protein resides in the mitochondrion inner membrane. Its subcellular location is the microsome membrane. It is found in the cytoplasm. The catalysed reaction is an organic molecule + reduced [NADPH--hemoprotein reductase] + O2 = an alcohol + oxidized [NADPH--hemoprotein reductase] + H2O + H(+). It catalyses the reaction estrone + reduced [NADPH--hemoprotein reductase] + O2 = 2-hydroxyestrone + oxidized [NADPH--hemoprotein reductase] + H2O + H(+). The enzyme catalyses estrone + reduced [NADPH--hemoprotein reductase] + O2 = 4-hydroxyestrone + oxidized [NADPH--hemoprotein reductase] + H2O + H(+). It carries out the reaction estrone + reduced [NADPH--hemoprotein reductase] + O2 = 6alpha-hydroxyestrone + oxidized [NADPH--hemoprotein reductase] + H2O + H(+). The catalysed reaction is estrone + reduced [NADPH--hemoprotein reductase] + O2 = 15alpha-hydroxyestrone + oxidized [NADPH--hemoprotein reductase] + H2O + H(+). It catalyses the reaction estrone + reduced [NADPH--hemoprotein reductase] + O2 = 16alpha-hydroxyestrone + oxidized [NADPH--hemoprotein reductase] + H2O + H(+). The enzyme catalyses 17beta-estradiol + reduced [NADPH--hemoprotein reductase] + O2 = 2-hydroxy-17beta-estradiol + oxidized [NADPH--hemoprotein reductase] + H2O + H(+). It carries out the reaction 17beta-estradiol + reduced [NADPH--hemoprotein reductase] + O2 = 4-hydroxy-17beta-estradiol + oxidized [NADPH--hemoprotein reductase] + H2O + H(+). The catalysed reaction is 17beta-estradiol + reduced [NADPH--hemoprotein reductase] + O2 = 6alpha-hydroxy-17beta-estradiol + oxidized [NADPH--hemoprotein reductase] + H2O + H(+). It catalyses the reaction 17beta-estradiol + reduced [NADPH--hemoprotein reductase] + O2 = 7alpha-hydroxy-17beta-estradiol + oxidized [NADPH--hemoprotein reductase] + H2O + H(+). The enzyme catalyses 17beta-estradiol + reduced [NADPH--hemoprotein reductase] + O2 = 15alpha-hydroxy-17beta-estradiol + oxidized [NADPH--hemoprotein reductase] + H2O + H(+). It carries out the reaction (5Z,8Z,11Z)-eicosatrienoate + reduced [NADPH--hemoprotein reductase] + O2 = 19-hydroxy-(5Z,8Z,11Z)-eicosatrienoate + oxidized [NADPH--hemoprotein reductase] + H2O + H(+). The catalysed reaction is (5Z,8Z,11Z,14Z)-eicosatetraenoate + reduced [NADPH--hemoprotein reductase] + O2 = 16-hydroxy-(5Z,8Z,11Z,14Z)-eicosatetraenoate + oxidized [NADPH--hemoprotein reductase] + H2O + H(+). It catalyses the reaction (5Z,8Z,11Z,14Z)-eicosatetraenoate + reduced [NADPH--hemoprotein reductase] + O2 = 17-hydroxy-(5Z,8Z,11Z,14Z)-eicosatetraenoate + oxidized [NADPH--hemoprotein reductase] + H2O + H(+). The enzyme catalyses (5Z,8Z,11Z,14Z)-eicosatetraenoate + reduced [NADPH--hemoprotein reductase] + O2 = 18-hydroxy-(5Z,8Z,11Z,14Z)-eicosatetraenoate + oxidized [NADPH--hemoprotein reductase] + H2O + H(+). It carries out the reaction (5Z,8Z,11Z,14Z)-eicosatetraenoate + reduced [NADPH--hemoprotein reductase] + O2 = 19-hydroxy-(5Z,8Z,11Z,14Z)-eicosatetraenoate + oxidized [NADPH--hemoprotein reductase] + H2O + H(+). The catalysed reaction is (5Z,8Z,11Z,14Z,17Z)-eicosapentaenoate + reduced [NADPH--hemoprotein reductase] + O2 = 19-hydroxy-(5Z,8Z,11Z,14Z,17Z)-eicosapentaenoate + oxidized [NADPH--hemoprotein reductase] + H2O + H(+). It catalyses the reaction (5Z,8Z,11Z,14Z)-eicosatetraenoate + reduced [NADPH--hemoprotein reductase] + O2 = (8R,9S)-epoxy-(5Z,11Z,14Z)-eicosatrienoate + oxidized [NADPH--hemoprotein reductase] + H2O + H(+). The enzyme catalyses (5Z,8Z,11Z,14Z)-eicosatetraenoate + reduced [NADPH--hemoprotein reductase] + O2 = (11R,12S)-epoxy-(5Z,8Z,14Z)-eicosatrienoate + oxidized [NADPH--hemoprotein reductase] + H2O + H(+). It carries out the reaction (5Z,8Z,11Z,14Z)-eicosatetraenoate + reduced [NADPH--hemoprotein reductase] + O2 = (14S,15R)-epoxy-(5Z,8Z,11Z)-eicosatrienoate + oxidized [NADPH--hemoprotein reductase] + H2O + H(+). The catalysed reaction is (5Z,8Z,11Z,14Z)-eicosatetraenoate + reduced [NADPH--hemoprotein reductase] + O2 = (14R,15S)-epoxy-(5Z,8Z,11Z)-eicosatrienoate + oxidized [NADPH--hemoprotein reductase] + H2O + H(+). It catalyses the reaction (5Z,8Z,11Z,14Z,17Z)-eicosapentaenoate + reduced [NADPH--hemoprotein reductase] + O2 = (17R,18S)-epoxy-(5Z,8Z,11Z,14Z)-eicosatetraenoate + oxidized [NADPH--hemoprotein reductase] + H2O + H(+). The enzyme catalyses (4Z,7Z,10Z,13Z,16Z,19Z)-docosahexaenoate + reduced [NADPH--hemoprotein reductase] + O2 = (19S,20R)-epoxy-(4Z,7Z,10Z,13Z,16Z)-docosapentaenoate + oxidized [NADPH--hemoprotein reductase] + H2O + H(+). It carries out the reaction (4Z,7Z,10Z,13Z,16Z,19Z)-docosahexaenoate + reduced [NADPH--hemoprotein reductase] + O2 = (19R,20S)-epoxy-(4Z,7Z,10Z,13Z,16Z)-docosapentaenoate + oxidized [NADPH--hemoprotein reductase] + H2O + H(+). The catalysed reaction is all-trans-retinol + reduced [NADPH--hemoprotein reductase] + O2 = all-trans-retinal + oxidized [NADPH--hemoprotein reductase] + 2 H2O + H(+). It catalyses the reaction all-trans-retinal + reduced [NADPH--hemoprotein reductase] + O2 = all-trans-retinoate + oxidized [NADPH--hemoprotein reductase] + H2O + 2 H(+). The enzyme catalyses (13S)-hydroperoxy-(9Z,11E)-octadecadienoate = 13-oxo-(9Z,11E)-octadecadienoate + H2O. It carries out the reaction (12S)-hydroperoxy-(5Z,8Z,10E,14Z)-eicosatetraenoate = 12-oxo-(5Z,8Z,10E,14Z)-eicosatetraenoate + H2O. The catalysed reaction is (15S)-hydroperoxy-(5Z,8Z,11Z,13E)-eicosatetraenoate = 15-oxo-(5Z,8Z,11Z,13E)-eicosatetraenoate + H2O. It catalyses the reaction (5S)-hydroperoxy-(6E,8Z,11Z,14Z)-eicosatetraenoate = 5-oxo-(6E,8Z,11Z,14Z)-eicosatetraenoate + H2O. The protein operates within steroid hormone biosynthesis. It functions in the pathway lipid metabolism; fatty acid metabolism. Its pathway is cofactor metabolism; retinol metabolism. In terms of biological role, a cytochrome P450 monooxygenase involved in the metabolism of various endogenous substrates, including fatty acids, steroid hormones and vitamins. Mechanistically, uses molecular oxygen inserting one oxygen atom into a substrate, and reducing the second into a water molecule, with two electrons provided by NADPH via cytochrome P450 reductase (NADPH--hemoprotein reductase). Catalyzes the hydroxylation of carbon-hydrogen bonds. Exhibits high catalytic activity for the formation of hydroxyestrogens from estrone (E1) and 17beta-estradiol (E2), namely 2-hydroxy E1 and E2, as well as D-ring hydroxylated E1 and E2 at the C15-alpha and C16-alpha positions. Displays different regioselectivities for polyunsaturated fatty acids (PUFA) hydroxylation. Catalyzes the epoxidation of double bonds of certain PUFA. Converts arachidonic acid toward epoxyeicosatrienoic acid (EET) regioisomers, 8,9-, 11,12-, and 14,15-EET, that function as lipid mediators in the vascular system. Displays an absolute stereoselectivity in the epoxidation of eicosapentaenoic acid (EPA) producing the 17(R),18(S) enantiomer. May play an important role in all-trans retinoic acid biosynthesis in extrahepatic tissues. Catalyzes two successive oxidative transformation of all-trans retinol to all-trans retinal and then to the active form all-trans retinoic acid. May also participate in eicosanoids metabolism by converting hydroperoxide species into oxo metabolites (lipoxygenase-like reaction, NADPH-independent). In Homo sapiens (Human), this protein is Cytochrome P450 1A1.